The primary structure comprises 465 residues: Cysteine--tRNA ligase (465 aa).

A Zn(2+)-binding site is contributed by C30. Residues 32-42 carry the 'HIGH' region motif; the sequence is ITVYDYCHVGH. Zn(2+)-binding residues include C214, H239, and E243. The 'KMSKS' region motif lies at 271–275; that stretch reads KMSKS. K274 contributes to the ATP binding site.

Belongs to the class-I aminoacyl-tRNA synthetase family. As to quaternary structure, monomer. Zn(2+) is required as a cofactor.

Its subcellular location is the cytoplasm. It carries out the reaction tRNA(Cys) + L-cysteine + ATP = L-cysteinyl-tRNA(Cys) + AMP + diphosphate. The polypeptide is Cysteine--tRNA ligase (Burkholderia ambifaria (strain MC40-6)).